The sequence spans 45 residues: Photosystem I reaction center subunit IX 1 (45 aa).

A helical transmembrane segment spans residues 9–29 (WFRSAPVVATIWITLTAGIIV).

The protein belongs to the PsaJ family.

It is found in the cellular thylakoid membrane. In terms of biological role, may help in the organization of the PsaE and PsaF subunits. This is Photosystem I reaction center subunit IX 1 from Prochlorococcus marinus (strain NATL1A).